Reading from the N-terminus, the 340-residue chain is ATP-dependent 6-phosphofructokinase (340 aa).

Gly11 lines the ATP pocket. 21–25 (RAVVR) is an ADP binding site. ATP is bound by residues 72–73 (RY) and 102–105 (GDGS). Asp103 provides a ligand contact to Mg(2+). 125-127 (TID) provides a ligand contact to substrate. The Proton acceptor role is filled by Asp127. Arg154 is a binding site for ADP. Residues Arg162 and 169 to 171 (MGR) contribute to the substrate site. ADP-binding positions include 185-187 (GAD), Lys211, and 213-215 (KNH). Substrate is bound by residues Glu222, Arg244, and 250 to 253 (HIQR).

It belongs to the phosphofructokinase type A (PFKA) family. ATP-dependent PFK group I subfamily. Prokaryotic clade 'B1' sub-subfamily. As to quaternary structure, homotetramer. Mg(2+) serves as cofactor.

Its subcellular location is the cytoplasm. The enzyme catalyses beta-D-fructose 6-phosphate + ATP = beta-D-fructose 1,6-bisphosphate + ADP + H(+). It functions in the pathway carbohydrate degradation; glycolysis; D-glyceraldehyde 3-phosphate and glycerone phosphate from D-glucose: step 3/4. Allosterically activated by ADP and other diphosphonucleosides, and allosterically inhibited by phosphoenolpyruvate. Catalyzes the phosphorylation of D-fructose 6-phosphate to fructose 1,6-bisphosphate by ATP, the first committing step of glycolysis. The chain is ATP-dependent 6-phosphofructokinase from Lactococcus lactis subsp. lactis (Streptococcus lactis).